Reading from the N-terminus, the 408-residue chain is CST complex subunit STN1 (408 aa).

The segment at 8–195 is interaction with CTC1; it reads MQCESSPKEE…KVYDQPFRNP (188 aa). A DNA-binding region (OB) is located at residues 64-165; the sequence is VDIMGAVISV…EICATIYYKV (102 aa). Winged helix-turn-helix (wHTH) stretches follow at residues 201–304 and 305–408; these read EALN…YVTS and KDKD…YTAF.

This sequence belongs to the STN1 family. Component of the CST complex, composed of TEN1/C17orf106, CTC1/C17orf68 and STN1; in the complex interacts directly with TEN1 and CTC1. Interacts with ACD/TPP1, POT1 and POLA1.

The protein localises to the nucleus. Its subcellular location is the chromosome. The protein resides in the telomere. Functionally, component of the CST complex proposed to act as a specialized replication factor promoting DNA replication under conditions of replication stress or natural replication barriers such as the telomere duplex. The CST complex binds single-stranded DNA with high affinity in a sequence-independent manner, while isolated subunits bind DNA with low affinity by themselves. Initially the CST complex has been proposed to protect telomeres from DNA degradation. However, the CST complex has been shown to be involved in several aspects of telomere replication. The CST complex inhibits telomerase and is involved in telomere length homeostasis; it is proposed to bind to newly telomerase-synthesized 3' overhangs and to terminate telomerase action implicating the association with the ACD:POT1 complex thus interfering with its telomerase stimulation activity. The CST complex is also proposed to be involved in fill-in synthesis of the telomeric C-strand probably implicating recruitment and activation of DNA polymerase alpha. The CST complex facilitates recovery from many forms of exogenous DNA damage; seems to be involved in the re-initiation of DNA replication at repaired forks and/or dormant origins. Required for efficicient replication of the duplex region of the telomere. Promotes efficient replication of lagging-strand telomeres. Promotes general replication start following replication-fork stalling implicating new origin firing. May be in involved in C-strand fill-in during late S/G2 phase independent of its role in telomere duplex replication. The sequence is that of CST complex subunit STN1 from Rattus norvegicus (Rat).